A 202-amino-acid polypeptide reads, in one-letter code: LexA repressor (202 aa).

Residues 28–48 constitute a DNA-binding region (H-T-H motif); it reads IAEIARAIGVSSPHGVREQLR. Catalysis depends on for autocatalytic cleavage activity residues S120 and K157.

Belongs to the peptidase S24 family. In terms of assembly, homodimer.

The catalysed reaction is Hydrolysis of Ala-|-Gly bond in repressor LexA.. Functionally, represses a number of genes involved in the response to DNA damage (SOS response), including recA and lexA. In the presence of single-stranded DNA, RecA interacts with LexA causing an autocatalytic cleavage which disrupts the DNA-binding part of LexA, leading to derepression of the SOS regulon and eventually DNA repair. In Methylococcus capsulatus (strain ATCC 33009 / NCIMB 11132 / Bath), this protein is LexA repressor.